Here is a 211-residue protein sequence, read N- to C-terminus: HTH-type transcriptional repressor FabR (211 aa).

The HTH tetR-type domain maps to 10–70; that stretch reads RTRRSLIEAA…TMVDESGLML (61 aa). Positions 33–52 form a DNA-binding region, H-T-H motif; sequence SLREVSREAGIAPTSFYRHF.

Homodimer.

The protein localises to the cytoplasm. Its function is as follows. Represses the transcription of fabB, involved in unsaturated fatty acid (UFA) biosynthesis. By controlling UFA production, FabR directly influences the physical properties of the membrane bilayer. The protein is HTH-type transcriptional repressor FabR of Yersinia pseudotuberculosis serotype O:1b (strain IP 31758).